We begin with the raw amino-acid sequence, 524 residues long: Acetyl-CoA hydrolase (524 aa).

279–283 (GIGNI) is a CoA binding site. Glu-304 (5-glutamyl coenzyme A thioester intermediate) is an active-site residue. Gly-398 contributes to the CoA binding site.

The protein belongs to the acetyl-CoA hydrolase/transferase family.

It is found in the cytoplasm. The enzyme catalyses acetyl-CoA + H2O = acetate + CoA + H(+). Its function is as follows. Presumably involved in regulating the intracellular acetyl-CoA pool for fatty acid and cholesterol synthesis and fatty acid oxidation. The polypeptide is Acetyl-CoA hydrolase (ACH1) (Yarrowia lipolytica (strain CLIB 122 / E 150) (Yeast)).